The primary structure comprises 496 residues: UDP-N-acetylmuramoylalanine--D-glutamate ligase (496 aa).

130 to 136 (GTNGKTT) contacts ATP.

It belongs to the MurCDEF family.

It localises to the cytoplasm. The enzyme catalyses UDP-N-acetyl-alpha-D-muramoyl-L-alanine + D-glutamate + ATP = UDP-N-acetyl-alpha-D-muramoyl-L-alanyl-D-glutamate + ADP + phosphate + H(+). It functions in the pathway cell wall biogenesis; peptidoglycan biosynthesis. In terms of biological role, cell wall formation. Catalyzes the addition of glutamate to the nucleotide precursor UDP-N-acetylmuramoyl-L-alanine (UMA). The chain is UDP-N-acetylmuramoylalanine--D-glutamate ligase from Mycobacterium bovis (strain ATCC BAA-935 / AF2122/97).